A 61-amino-acid chain; its full sequence is Large ribosomal subunit protein eL24 (61 aa).

Cys7, Cys10, Cys33, and Cys37 together coordinate Zn(2+). Residues 7 to 37 form a C4-type zinc finger; that stretch reads CSFCGHEIPPGTGLMYVRNDGTILWFCSSKC.

This sequence belongs to the eukaryotic ribosomal protein eL24 family. Part of the 50S ribosomal subunit. Forms a cluster with proteins L3 and L14. The cofactor is Zn(2+).

Binds to the 23S rRNA. The polypeptide is Large ribosomal subunit protein eL24 (Saccharolobus islandicus (strain Y.N.15.51 / Yellowstone #2) (Sulfolobus islandicus)).